The primary structure comprises 456 residues: tRNA modification GTPase MnmE (456 aa).

Arg-25, Glu-87, and Arg-126 together coordinate (6S)-5-formyl-5,6,7,8-tetrahydrofolate. The region spanning 221 to 377 is the TrmE-type G domain; sequence GLKVAIVGQP…LENAIIEQVN (157 aa). Asn-231 lines the K(+) pocket. Residues 231–236, 250–256, and 275–278 contribute to the GTP site; these read NVGKSS, TDLPGTT, and DTAG. Residue Ser-235 participates in Mg(2+) binding. K(+) is bound by residues Thr-250, Leu-252, and Thr-255. Residue Thr-256 participates in Mg(2+) binding. Lys-456 serves as a coordination point for (6S)-5-formyl-5,6,7,8-tetrahydrofolate.

This sequence belongs to the TRAFAC class TrmE-Era-EngA-EngB-Septin-like GTPase superfamily. TrmE GTPase family. As to quaternary structure, homodimer. Heterotetramer of two MnmE and two MnmG subunits. K(+) is required as a cofactor.

It is found in the cytoplasm. Its function is as follows. Exhibits a very high intrinsic GTPase hydrolysis rate. Involved in the addition of a carboxymethylaminomethyl (cmnm) group at the wobble position (U34) of certain tRNAs, forming tRNA-cmnm(5)s(2)U34. In Synechocystis sp. (strain ATCC 27184 / PCC 6803 / Kazusa), this protein is tRNA modification GTPase MnmE.